A 693-amino-acid polypeptide reads, in one-letter code: MSLAQEINRVVAPFEVISEFKPAGDQPAAIAELTERIKNGEKDVVLLGATGTGKSATTAWLIEQVQRPTLVMVQNKTLAAQLANEFRELLPNNAVEYFVSYYDYYQPEAYVAQTDTFIEKDSSVNEEVERLRHSATNALLTRRDVIVVATVSCIYGLGTPEEYIAGMVTLRKGAEMNRDDLLRKFVSMQYARNDMDFHRGTFRVRGDTVEIIPMYEELAIRIEFFGDEIENIHTLHPLTGEVIRDEEEMYVFPASHYVAGPERMSRAIKRIEDELAERLQVLESQNKLVEAQRLRMRTTYDLEMMQQMGFCNGIENYSSHIDGRARGTAPHCLLDYFPDDFLLVIDESHVTVPQIGAMYEGDMSRKRNLVDFGFRLPSAMDNRPLKWDEFQERVGQTVYLSATPGKYELGKSDGFVQQIIRPTGLIDPEVVVKPTKGQIDDLLGEIKTRTAKNERVLVTTLTKRMAEDLTDYLLGHGVKVEYLHSDVDTLRRVELLRELRMGVFDVLVGINLLREGLDLPEVSLVSILDADKEGFLRSSTSLIQTIGRAARNVSGQVHMYADRITDSMAHAIDETNRRRAIQVAYNTEHGIDPQPLRKKIADITDQLAKEDADTRELLAASGKTRGKGKGASTVRADGLAAAPAEDLVGLIEQLTEQMHAAAGELQFELAARLRDEVGELKKELRQMQAAGHA.

The region spanning Glu-35–Met-188 is the Helicase ATP-binding domain. Gly-48–Ser-55 is a binding site for ATP. The Beta-hairpin motif lies at Tyr-101 to Val-124. The Helicase C-terminal domain maps to Gln-438–Thr-604. The UVR domain maps to Val-648–Glu-683.

The protein belongs to the UvrB family. As to quaternary structure, forms a heterotetramer with UvrA during the search for lesions. Interacts with UvrC in an incision complex.

The protein resides in the cytoplasm. Its function is as follows. The UvrABC repair system catalyzes the recognition and processing of DNA lesions. A damage recognition complex composed of 2 UvrA and 2 UvrB subunits scans DNA for abnormalities. Upon binding of the UvrA(2)B(2) complex to a putative damaged site, the DNA wraps around one UvrB monomer. DNA wrap is dependent on ATP binding by UvrB and probably causes local melting of the DNA helix, facilitating insertion of UvrB beta-hairpin between the DNA strands. Then UvrB probes one DNA strand for the presence of a lesion. If a lesion is found the UvrA subunits dissociate and the UvrB-DNA preincision complex is formed. This complex is subsequently bound by UvrC and the second UvrB is released. If no lesion is found, the DNA wraps around the other UvrB subunit that will check the other stand for damage. In Arthrobacter sp. (strain FB24), this protein is UvrABC system protein B.